The chain runs to 382 residues: Galactokinase (382 aa).

Position 34–37 (34–37 (EHTD)) interacts with substrate. 124 to 130 (GAGLSSS) lines the ATP pocket. Ser130 and Glu162 together coordinate Mg(2+). The active-site Proton acceptor is the Asp174. Tyr223 lines the substrate pocket.

This sequence belongs to the GHMP kinase family. GalK subfamily.

The protein localises to the cytoplasm. It carries out the reaction alpha-D-galactose + ATP = alpha-D-galactose 1-phosphate + ADP + H(+). The protein operates within carbohydrate metabolism; galactose metabolism. Its function is as follows. Catalyzes the transfer of the gamma-phosphate of ATP to D-galactose to form alpha-D-galactose-1-phosphate (Gal-1-P). The sequence is that of Galactokinase from Salmonella newport (strain SL254).